A 341-amino-acid polypeptide reads, in one-letter code: Tetraacyldisaccharide 4'-kinase (341 aa).

54-61 is a binding site for ATP; that stretch reads TVGGAGKT.

Belongs to the LpxK family.

It carries out the reaction a lipid A disaccharide + ATP = a lipid IVA + ADP + H(+). It participates in glycolipid biosynthesis; lipid IV(A) biosynthesis; lipid IV(A) from (3R)-3-hydroxytetradecanoyl-[acyl-carrier-protein] and UDP-N-acetyl-alpha-D-glucosamine: step 6/6. Its function is as follows. Transfers the gamma-phosphate of ATP to the 4'-position of a tetraacyldisaccharide 1-phosphate intermediate (termed DS-1-P) to form tetraacyldisaccharide 1,4'-bis-phosphate (lipid IVA). The polypeptide is Tetraacyldisaccharide 4'-kinase (Brucella anthropi (strain ATCC 49188 / DSM 6882 / CCUG 24695 / JCM 21032 / LMG 3331 / NBRC 15819 / NCTC 12168 / Alc 37) (Ochrobactrum anthropi)).